The sequence spans 358 residues: Arginine kinase (358 aa).

Residues 2 to 84 (SDADLFSKLD…LDEVIKDYHK (83 aa)) enclose the Phosphagen kinase N-terminal domain. Substrate is bound at residue 57-61 (GVGIY). Residues 112–350 (FIVSTRVRVG…EEILKREKEL (239 aa)) form the Phosphagen kinase C-terminal domain. ATP is bound by residues 115–119 (STRVR) and H178. E218 provides a ligand contact to substrate. R222 serves as a coordination point for ATP. C265 is a binding site for substrate. ATP contacts are provided by residues 274 to 278 (RASVH) and 303 to 308 (RGIHGE). E308 lines the substrate pocket.

The protein belongs to the ATP:guanido phosphotransferase family.

The enzyme catalyses L-arginine + ATP = N(omega)-phospho-L-arginine + ADP + H(+). The sequence is that of Arginine kinase from Turbo cornutus (Horned turban).